A 687-amino-acid chain; its full sequence is MVVFPKSLSPKHVLKLLKSEKNPRAAFALFDSATRHPGYAHSAVVYHHILRRLSETRMVNHVSRIVELIRSQECKCDEDVALSVIKTYGKNSMPDQALDVFKRMREIFGCEPAIRSYNTLLNAFVEAKQWVKVESLFAYFETAGVAPNLQTYNVLIKMSCKKKEFEKARGFLDWMWKEGFKPDVFSYSTVINDLAKAGKLDDALELFDEMSERGVAPDVTCYNILIDGFLKEKDHKTAMELWDRLLEDSSVYPNVKTHNIMISGLSKCGRVDDCLKIWERMKQNEREKDLYTYSSLIHGLCDAGNVDKAESVFNELDERKASIDVVTYNTMLGGFCRCGKIKESLELWRIMEHKNSVNIVSYNILIKGLLENGKIDEATMIWRLMPAKGYAADKTTYGIFIHGLCVNGYVNKALGVMQEVESSGGHLDVYAYASIIDCLCKKKRLEEASNLVKEMSKHGVELNSHVCNALIGGLIRDSRLGEASFFLREMGKNGCRPTVVSYNILICGLCKAGKFGEASAFVKEMLENGWKPDLKTYSILLCGLCRDRKIDLALELWHQFLQSGLETDVMMHNILIHGLCSVGKLDDAMTVMANMEHRNCTANLVTYNTLMEGFFKVGDSNRATVIWGYMYKMGLQPDIISYNTIMKGLCMCRGVSYAMEFFDDARNHGIFPTVYTWNILVRAVVNR.

PPR repeat units follow at residues 42-76 (SAVV…ECKC), 77-107 (DEDV…MREI), 113-147 (AIRS…GVAP), 148-182 (NLQT…GFKP), 183-217 (DVFS…GVAP), 218-253 (DVTC…SVYP), 254-288 (NVKT…EREK), 289-323 (DLYT…KASI), 324-358 (DVVT…NSVN), 359-392 (IVSY…GYAA), 393-427 (DKTT…GGHL), 428-462 (DVYA…GVEL), 463-497 (NSHV…GCRP), 498-532 (TVVS…GWKP), 533-567 (DLKT…GLET), 568-602 (DVMM…NCTA), 603-637 (NLVT…GLQP), and 638-672 (DIIS…GIFP).

It belongs to the PPR family. P subfamily.

This is Pentatricopeptide repeat-containing protein At3g09060 from Arabidopsis thaliana (Mouse-ear cress).